The sequence spans 533 residues: Frizzled/smoothened-like sans CRD protein H (533 aa).

Positions 1–21 (MFIKFYFFIIFLILNFKNNYA) are cleaved as a signal peptide. Topologically, residues 22–103 (SPTLLDSVLS…GDWTTMMDMS (82 aa)) are extracellular. Asn-76 is a glycosylation site (N-linked (GlcNAc...) asparagine). The chain crosses the membrane as a helical span at residues 104-124 (LIVATISFFASIFLILTYSPL). Over 125–134 (MNPSYNNRHT) the chain is Cytoplasmic. A helical transmembrane segment spans residues 135–155 (IGILSMSFGIFLIMFTDMYNL). Topologically, residues 156–177 (KKRFTLGCPSETRYAIQNDADC) are extracellular. The chain crosses the membrane as a helical span at residues 178–198 (LITGLIFQFGCVSAVFFWTAL). Topologically, residues 199–216 (SLDLYFQITNRNISRKYD) are cytoplasmic. Residues 217-237 (LYYFIGVNLISLIFTFVPVIS) form a helical membrane-spanning segment. Residues 238–259 (KSYGYGDFALGCWILDFNYALG) lie on the Extracellular side of the membrane. The helical transmembrane segment at 260–280 (CFWIPLSVCLIFSTVVVLMIL) threads the bilayer. Residues 281–302 (YEVYKIYKASNQKTSLKGHIKP) are Cytoplasmic-facing. A helical transmembrane segment spans residues 303-323 (LLCLISNCFEFFYVFGYSLYL). At 324–360 (ATKLTELHDNMDAYIKCLFLNSQNDPDSYTCPDHRLK) the chain is on the extracellular side. Residues 361-381 (LGPQFLFFLSLRLLGVSGIVF) traverse the membrane as a helical segment. Residues 382–533 (YGTNSKVRKI…LTNINTIDNV (152 aa)) lie on the Cytoplasmic side of the membrane. The disordered stretch occupies residues 454–533 (IIVTPGGDDD…LTNINTIDNV (80 aa)). A compositionally biased stretch (low complexity) spans 466 to 518 (NNNNNNNNNNNNNNNNNNNNNNNNNNNNNNNNNNNNNNNNNNNNNSNENNENN). The stretch at 501 to 528 (NNNNNNNNNNSNENNENNTQEIELTNIN) forms a coiled coil. Positions 519–533 (TQEIELTNINTIDNV) are enriched in polar residues.

This sequence belongs to the G-protein coupled receptor Fz/Smo family.

The protein resides in the membrane. The chain is Frizzled/smoothened-like sans CRD protein H (fscH) from Dictyostelium discoideum (Social amoeba).